The chain runs to 1062 residues: Carbamoyl phosphate synthase large chain (1062 aa).

A carboxyphosphate synthetic domain region spans residues 1–401; sequence MPKRTDIHKI…AMQKAVQSLE (401 aa). ATP-binding residues include arginine 129, arginine 169, glycine 175, glycine 176, lysine 208, isoleucine 210, glutamate 215, glycine 241, isoleucine 242, histidine 243, glutamine 284, and glutamate 298. Residues 133–327 form the ATP-grasp 1 domain; that stretch reads KELCQKLGEP…IAKMAAKIAI (195 aa). 3 residues coordinate Mg(2+): glutamine 284, glutamate 298, and asparagine 300. Residues glutamine 284, glutamate 298, and asparagine 300 each coordinate Mn(2+). Residues 402 to 546 are oligomerization domain; sequence IDEKDLYSAK…YSTYDGENES (145 aa). Positions 547–929 are carbamoyl phosphate synthetic domain; sequence RKSGKKSVIV…ALYKAFAGAK (383 aa). The 191-residue stretch at 671-861 folds into the ATP-grasp 2 domain; sequence DQIIKSLHLH…MAQVATRVIM (191 aa). Arginine 707, aspartate 746, leucine 748, glutamate 752, glycine 777, valine 778, histidine 779, serine 780, glutamine 820, and glutamate 832 together coordinate ATP. Positions 820, 832, and 834 each coordinate Mg(2+). Mn(2+)-binding residues include glutamine 820, glutamate 832, and asparagine 834. One can recognise an MGS-like domain in the interval 930–1062; the sequence is MQLPENGNVL…NRSFATDALK (133 aa). Positions 930–1062 are allosteric domain; it reads MQLPENGNVL…NRSFATDALK (133 aa).

It belongs to the CarB family. As to quaternary structure, composed of two chains; the small (or glutamine) chain promotes the hydrolysis of glutamine to ammonia, which is used by the large (or ammonia) chain to synthesize carbamoyl phosphate. Tetramer of heterodimers (alpha,beta)4. Mg(2+) serves as cofactor. It depends on Mn(2+) as a cofactor.

The enzyme catalyses hydrogencarbonate + L-glutamine + 2 ATP + H2O = carbamoyl phosphate + L-glutamate + 2 ADP + phosphate + 2 H(+). It carries out the reaction hydrogencarbonate + NH4(+) + 2 ATP = carbamoyl phosphate + 2 ADP + phosphate + 2 H(+). The protein operates within amino-acid biosynthesis; L-arginine biosynthesis; carbamoyl phosphate from bicarbonate: step 1/1. It functions in the pathway pyrimidine metabolism; UMP biosynthesis via de novo pathway; (S)-dihydroorotate from bicarbonate: step 1/3. Functionally, large subunit of the glutamine-dependent carbamoyl phosphate synthetase (CPSase). CPSase catalyzes the formation of carbamoyl phosphate from the ammonia moiety of glutamine, carbonate, and phosphate donated by ATP, constituting the first step of 2 biosynthetic pathways, one leading to arginine and/or urea and the other to pyrimidine nucleotides. The large subunit (synthetase) binds the substrates ammonia (free or transferred from glutamine from the small subunit), hydrogencarbonate and ATP and carries out an ATP-coupled ligase reaction, activating hydrogencarbonate by forming carboxy phosphate which reacts with ammonia to form carbamoyl phosphate. This chain is Carbamoyl phosphate synthase large chain, found in Lactobacillus delbrueckii subsp. bulgaricus (strain ATCC BAA-365 / Lb-18).